The chain runs to 200 residues: Small ribosomal subunit protein uS4 (200 aa).

Residues 22-42 form a disordered region; sequence TGKELEKRPYAPGPHGPNQRK. In terms of domain architecture, S4 RNA-binding spans 92–152; it reads ARLDNLVYRM…EKSNSLVVVK (61 aa).

The protein belongs to the universal ribosomal protein uS4 family. In terms of assembly, part of the 30S ribosomal subunit. Contacts protein S5. The interaction surface between S4 and S5 is involved in control of translational fidelity.

Functionally, one of the primary rRNA binding proteins, it binds directly to 16S rRNA where it nucleates assembly of the body of the 30S subunit. In terms of biological role, with S5 and S12 plays an important role in translational accuracy. The chain is Small ribosomal subunit protein uS4 from Bacillus mycoides (strain KBAB4) (Bacillus weihenstephanensis).